The chain runs to 282 residues: Protein-export membrane protein SecF (282 aa).

A run of 6 helical transmembrane segments spans residues 16-36, 126-146, 148-168, 169-189, 221-241, and 253-273; these read MVALPLCLLILSVIFLAFNTV, QAIWALLFAFVLMAIVVFVAF, IFIPSVAVVLSAFSDIVITAA, FMDVFGLTLSLGTTAALLMLI, GIIMTTTTLAAVVVMFIVFSL, and VLIIGLIIDMMNTWMLNAGLL.

Belongs to the SecD/SecF family. SecF subfamily. As to quaternary structure, part of the protein translocation apparatus. Forms a complex with SecD.

It is found in the cell membrane. In terms of biological role, involved in protein export. The sequence is that of Protein-export membrane protein SecF from Methanolacinia petrolearia (strain DSM 11571 / OCM 486 / SEBR 4847) (Methanoplanus petrolearius).